The sequence spans 347 residues: MNPLTFAMILLTIMLGTTIVMTSSHWLVVWIGFEMNMLAVIPVLMKKYNPRSMEAATKYFLTQATASMLLMLAIVINLIYSGQWSTTNPLNPTASIIMTLALAMKLGLAPFHFWVPEVTQGIQLSSGLILLTWQKLAPISILYQISSTTNLNLLLAMSILSVAIGGWGGLNQTQLRKIMAYSSIAHMGWMTAIMVYNPTMALLNLVIYILLTTTTFSVFMLNSSTTTLSLSHMWNKTPLLTTALLMTMLSLGGLPPLSGFLPKWMIIQELTKNNSVIVPTTMAITALLNLYFYMRLTYSTSLTTFPSTNNMKIKWQLNNTKPTIHLSPLIILSTLILPLSPILTLLE.

Transmembrane regions (helical) follow at residues 1–21, 25–45, 59–79, 96–116, 122–142, 150–170, 201–221, 242–262, 274–294, and 326–346; these read MNPL…TIVM, HWLV…PVLM, YFLT…INLI, IIMT…FWVP, IQLS…ISIL, NLNL…WGGL, ALLN…VFML, TALL…GFLP, NSVI…YFYM, and LSPL…LTLL.

This sequence belongs to the complex I subunit 2 family. In terms of assembly, core subunit of respiratory chain NADH dehydrogenase (Complex I) which is composed of 45 different subunits. Interacts with TMEM242.

The protein resides in the mitochondrion inner membrane. The enzyme catalyses a ubiquinone + NADH + 5 H(+)(in) = a ubiquinol + NAD(+) + 4 H(+)(out). Its function is as follows. Core subunit of the mitochondrial membrane respiratory chain NADH dehydrogenase (Complex I) which catalyzes electron transfer from NADH through the respiratory chain, using ubiquinone as an electron acceptor. Essential for the catalytic activity and assembly of complex I. In Eidolon helvum (Straw-colored fruit bat), this protein is NADH-ubiquinone oxidoreductase chain 2.